The following is a 128-amino-acid chain: Putative pre-16S rRNA nuclease (128 aa).

This sequence belongs to the YqgF nuclease family.

The protein resides in the cytoplasm. Could be a nuclease involved in processing of the 5'-end of pre-16S rRNA. The sequence is that of Putative pre-16S rRNA nuclease from Sulfurovum sp. (strain NBC37-1).